A 98-amino-acid polypeptide reads, in one-letter code: Integration host factor subunit alpha (98 aa).

The tract at residues 52–71 is disordered; that stretch reads FDLRDKNQRPGRNPKTGEDI.

Belongs to the bacterial histone-like protein family. Heterodimer of an alpha and a beta chain.

This protein is one of the two subunits of integration host factor, a specific DNA-binding protein that functions in genetic recombination as well as in transcriptional and translational control. This is Integration host factor subunit alpha from Photorhabdus laumondii subsp. laumondii (strain DSM 15139 / CIP 105565 / TT01) (Photorhabdus luminescens subsp. laumondii).